A 225-amino-acid chain; its full sequence is NAD(P)H-quinone oxidoreductase subunit K, chloroplastic (225 aa).

[4Fe-4S] cluster contacts are provided by Cys43, Cys44, Cys108, and Cys139.

The protein belongs to the complex I 20 kDa subunit family. As to quaternary structure, NDH is composed of at least 16 different subunits, 5 of which are encoded in the nucleus. It depends on [4Fe-4S] cluster as a cofactor.

The protein localises to the plastid. Its subcellular location is the chloroplast thylakoid membrane. The enzyme catalyses a plastoquinone + NADH + (n+1) H(+)(in) = a plastoquinol + NAD(+) + n H(+)(out). The catalysed reaction is a plastoquinone + NADPH + (n+1) H(+)(in) = a plastoquinol + NADP(+) + n H(+)(out). In terms of biological role, NDH shuttles electrons from NAD(P)H:plastoquinone, via FMN and iron-sulfur (Fe-S) centers, to quinones in the photosynthetic chain and possibly in a chloroplast respiratory chain. The immediate electron acceptor for the enzyme in this species is believed to be plastoquinone. Couples the redox reaction to proton translocation, and thus conserves the redox energy in a proton gradient. This Brachypodium distachyon (Purple false brome) protein is NAD(P)H-quinone oxidoreductase subunit K, chloroplastic.